Consider the following 38-residue polypeptide: Photosystem II reaction center protein L (38 aa).

A helical membrane pass occupies residues 17-37 (SLYWGLLLIFVLAVLFSNYFF).

Belongs to the PsbL family. As to quaternary structure, PSII is composed of 1 copy each of membrane proteins PsbA, PsbB, PsbC, PsbD, PsbE, PsbF, PsbH, PsbI, PsbJ, PsbK, PsbL, PsbM, PsbT, PsbX, PsbY, PsbZ, Psb30/Ycf12, at least 3 peripheral proteins of the oxygen-evolving complex and a large number of cofactors. It forms dimeric complexes.

Its subcellular location is the plastid. The protein resides in the chloroplast thylakoid membrane. Its function is as follows. One of the components of the core complex of photosystem II (PSII). PSII is a light-driven water:plastoquinone oxidoreductase that uses light energy to abstract electrons from H(2)O, generating O(2) and a proton gradient subsequently used for ATP formation. It consists of a core antenna complex that captures photons, and an electron transfer chain that converts photonic excitation into a charge separation. This subunit is found at the monomer-monomer interface and is required for correct PSII assembly and/or dimerization. This is Photosystem II reaction center protein L from Psilotum nudum (Whisk fern).